A 356-amino-acid chain; its full sequence is Nuclear hormone receptor family member nhr-169 (356 aa).

Positions 16–90 (DPICSVCNFS…AGMKRSLVKE (75 aa)) form a DNA-binding region, nuclear receptor. 2 consecutive NR C4-type zinc fingers follow at residues 19-40 (CSVC…CSAC) and 56-72 (CKKD…CRAC). The NR LBD domain occupies 144 to 356 (DVSKILKTTP…KLYLHMGLPF (213 aa)).

It belongs to the nuclear hormone receptor family.

Its subcellular location is the nucleus. Its function is as follows. Orphan nuclear receptor. In Caenorhabditis elegans, this protein is Nuclear hormone receptor family member nhr-169 (nhr-169).